A 328-amino-acid chain; its full sequence is Sin3 histone deacetylase corepressor complex component SDS3 (328 aa).

A disordered region spans residues 1-64 (MSAAALLAPA…TDLAKHDEED (64 aa)). At Ser2 the chain carries N-acetylserine. Positions 2–170 (SAAALLAPAP…IENEKLTMEL (169 aa)) are mediates interaction with USP17L2. Positions 10 to 21 (APAPAGAPPAPE) are enriched in pro residues. Acidic residues-rich tracts occupy residues 23-37 (YPEEDEELESAEDDE) and 45-54 (SDEDTEDASE). A phosphoserine mark is found at Ser32 and Ser45. Thr49 carries the post-translational modification Phosphothreonine. Ser53 bears the Phosphoserine mark. The stretch at 64-171 (DFVEMKEQMY…ENEKLTMELT (108 aa)) forms a coiled coil. Residues Lys69, Lys178, and Lys201 each participate in a glycyl lysine isopeptide (Lys-Gly) (interchain with G-Cter in SUMO2) cross-link. The tract at residues 226-252 (LKSPKRPASPSSPEHLPTTPAESPAQR) is disordered. Phosphoserine is present on residues Ser228, Ser234, and Ser237. Residue Thr244 is modified to Phosphothreonine.

This sequence belongs to the SDS3 family. As to quaternary structure, homodimer. Component of the SIN3 histone deacetylase (HDAC) corepressor complex. Interacts with SIN3A. Interaction with SIN3B enhances the interaction between SIN3B and HDAC1 to form a complex. Interacts with HCFC1. Component of a mSin3A corepressor complex that contains SIN3A, SAP130, SUDS3/SAP45, ARID4B/SAP180, HDAC1 and HDAC2. Interacts with USP17L2; the interaction is direct. Interacts with FOXK2. Post-translationally, polyubiquitinated. 'Lys-63'-polyubiquitinated SUDS3 positively regulates histone deacetylation. Regulated through deubiquitination by USP17L2/USP17 that cleaves 'Lys-63'-linked ubiquitin chains.

It is found in the nucleus. Regulatory protein which represses transcription and augments histone deacetylase activity of HDAC1. May have a potential role in tumor suppressor pathways through regulation of apoptosis. May function in the assembly and/or enzymatic activity of the mSin3A corepressor complex or in mediating interactions between the complex and other regulatory complexes. The chain is Sin3 histone deacetylase corepressor complex component SDS3 (SUDS3) from Bos taurus (Bovine).